Reading from the N-terminus, the 435-residue chain is Plant UBX domain-containing protein 6 (435 aa).

3 disordered regions span residues 1–150 (MDVN…PQKV), 208–265 (ENYT…EDQP), and 311–352 (PTTT…SMSS). Over residues 49 to 62 (TSSFSTFDGSSGYS) the composition is skewed to low complexity. Basic and acidic residues predominate over residues 112–129 (AVEHYGGEENRAIERPEQ). Residues 130 to 141 (SSRSMSEETVSS) are compositionally biased toward low complexity. An SEP 1 domain is found at 150-211 (VFTHTVTSWS…IISREEENYT (62 aa)). Over residues 211–222 (TESQAGSDSAST) the composition is skewed to polar residues. The segment covering 231–242 (RAKESAIERSEQ) has biased composition (basic and acidic residues). Residues 252-265 (DSAELQEQQQEDQP) show a composition bias toward acidic residues. One can recognise an SEP 2 domain in the interval 268–343 (VVTYTVTIWR…ESTSTEPPLT (76 aa)). Low complexity-rich tracts occupy residues 312 to 323 (TTTRSTSCSSQT) and 333 to 349 (SEST…QPPS). The UBX domain maps to 357 to 434 (PAAPTTSIQL…GIANSVLVQK (78 aa)).

This chain is Plant UBX domain-containing protein 6, found in Arabidopsis thaliana (Mouse-ear cress).